The sequence spans 329 residues: Delta-aminolevulinic acid dehydratase (329 aa).

The active-site Schiff-base intermediate with substrate is the Lys-202. Residues Arg-212 and Arg-223 each contribute to the 5-aminolevulinate site. Glu-239 contacts Mg(2+). Lys-254 serves as the catalytic Schiff-base intermediate with substrate. Positions 280 and 319 each coordinate 5-aminolevulinate.

The protein belongs to the ALAD family. As to quaternary structure, homooctamer.

It catalyses the reaction 2 5-aminolevulinate = porphobilinogen + 2 H2O + H(+). It participates in porphyrin-containing compound metabolism; protoporphyrin-IX biosynthesis; coproporphyrinogen-III from 5-aminolevulinate: step 1/4. Its function is as follows. Catalyzes an early step in the biosynthesis of tetrapyrroles. Binds two molecules of 5-aminolevulinate per subunit, each at a distinct site, and catalyzes their condensation to form porphobilinogen. This Mycobacterium leprae (strain TN) protein is Delta-aminolevulinic acid dehydratase (hemB).